The chain runs to 426 residues: D-tagatose-1,6-bisphosphate aldolase subunit KbaZ (426 aa).

It belongs to the GatZ/KbaZ family. KbaZ subfamily. In terms of assembly, forms a complex with KbaY.

It participates in carbohydrate metabolism; D-tagatose 6-phosphate degradation; D-glyceraldehyde 3-phosphate and glycerone phosphate from D-tagatose 6-phosphate: step 2/2. Its function is as follows. Component of the tagatose-1,6-bisphosphate aldolase KbaYZ that is required for full activity and stability of the Y subunit. Could have a chaperone-like function for the proper and stable folding of KbaY. When expressed alone, KbaZ does not show any aldolase activity. The polypeptide is D-tagatose-1,6-bisphosphate aldolase subunit KbaZ (Escherichia coli O6:H1 (strain CFT073 / ATCC 700928 / UPEC)).